The chain runs to 206 residues: Large ribosomal subunit protein uL4 (206 aa).

Positions 65–76 are enriched in basic residues; the sequence is KQKGTGRARHSS. Residues 65–94 form a disordered region; sequence KQKGTGRARHSSARAPQFRGGGKAHGPVVR.

The protein belongs to the universal ribosomal protein uL4 family. In terms of assembly, part of the 50S ribosomal subunit.

One of the primary rRNA binding proteins, this protein initially binds near the 5'-end of the 23S rRNA. It is important during the early stages of 50S assembly. It makes multiple contacts with different domains of the 23S rRNA in the assembled 50S subunit and ribosome. Functionally, forms part of the polypeptide exit tunnel. The chain is Large ribosomal subunit protein uL4 from Bartonella quintana (strain Toulouse) (Rochalimaea quintana).